The following is a 166-amino-acid chain: MGELTTSIVAAEEGGGTSNFLIPNGTFFVVLLIFLIVLGVIAKWVVPPVSKVLAEREAMLAKTAADNRKSAEQVAAAQADYDKTMADARGEASSIRDEARVAGRQVVDEKRAVASGEVAETVKSADQQLSQQGSAAQSELQSSVDGLSATLASRILGVDVNSGGSR.

Residues 27 to 47 (FFVVLLIFLIVLGVIAKWVVP) form a helical membrane-spanning segment. The interval 124–143 (SADQQLSQQGSAAQSELQSS) is disordered.

Belongs to the ATPase B chain family. F-type ATPases have 2 components, F(1) - the catalytic core - and F(0) - the membrane proton channel. F(1) has five subunits: alpha(3), beta(3), gamma(1), delta(1), epsilon(1). F(0) has three main subunits: a(1), b(2) and c(10-14). The alpha and beta chains form an alternating ring which encloses part of the gamma chain. F(1) is attached to F(0) by a central stalk formed by the gamma and epsilon chains, while a peripheral stalk is formed by the delta and b chains.

It is found in the cell membrane. In terms of biological role, f(1)F(0) ATP synthase produces ATP from ADP in the presence of a proton or sodium gradient. F-type ATPases consist of two structural domains, F(1) containing the extramembraneous catalytic core and F(0) containing the membrane proton channel, linked together by a central stalk and a peripheral stalk. During catalysis, ATP synthesis in the catalytic domain of F(1) is coupled via a rotary mechanism of the central stalk subunits to proton translocation. Component of the F(0) channel, it forms part of the peripheral stalk, linking F(1) to F(0). In Mycolicibacterium vanbaalenii (strain DSM 7251 / JCM 13017 / BCRC 16820 / KCTC 9966 / NRRL B-24157 / PYR-1) (Mycobacterium vanbaalenii), this protein is ATP synthase subunit b.